We begin with the raw amino-acid sequence, 690 residues long: Cysteine-rich receptor-like protein kinase 21 (690 aa).

An N-terminal signal peptide occupies residues 1 to 24 (MQKNKMVDLRAIFWFVVISSCAVA). Residues 25–129 (APTCIQRSDF…CLVRYSNHLI (105 aa)) enclose the Gnk2-homologous 1 domain. Residues 25–281 (APTCIQRSDF…KDGKNISTGS (257 aa)) are Extracellular-facing. Asn130, Asn148, Asn155, Asn220, Asn268, and Asn276 each carry an N-linked (GlcNAc...) asparagine glycan. Residues 140 to 246 (AEYIEYKYNT…CFMRWDLQPF (107 aa)) form the Gnk2-homologous 2 domain. Residues 282-302 (IVAIAVVSVVVSTVLLALGYA) form a helical membrane-spanning segment. The Cytoplasmic portion of the chain corresponds to 303–690 (VSRRRKAYQS…DASITSVRPR (388 aa)). The Protein kinase domain occupies 363-640 (FHKSNKLGHG…IFRMLTNVSI (278 aa)). ATP-binding positions include 369–377 (LGHGGFGAV) and Lys391. Residue Tyr436 is modified to Phosphotyrosine. The active-site Proton acceptor is Asp488. Ser492 is subject to Phosphoserine. Thr528 is modified (phosphothreonine). The residue at position 536 (Tyr536) is a Phosphotyrosine.

Belongs to the protein kinase superfamily. Ser/Thr protein kinase family. CRK subfamily.

The protein resides in the membrane. The enzyme catalyses L-seryl-[protein] + ATP = O-phospho-L-seryl-[protein] + ADP + H(+). It catalyses the reaction L-threonyl-[protein] + ATP = O-phospho-L-threonyl-[protein] + ADP + H(+). In Arabidopsis thaliana (Mouse-ear cress), this protein is Cysteine-rich receptor-like protein kinase 21 (CRK21).